The primary structure comprises 37 residues: Large ribosomal subunit protein bL36 (37 aa).

It belongs to the bacterial ribosomal protein bL36 family.

The protein is Large ribosomal subunit protein bL36 of Synechococcus elongatus (strain ATCC 33912 / PCC 7942 / FACHB-805) (Anacystis nidulans R2).